The following is a 71-amino-acid chain: MKQAIHPEYKKVTATCSCGATFEFGSTAREDFYVDVCSQCHPFYTGKQKQATTGGRVERFNKRFGAAIKRN.

4 residues coordinate Zn(2+): C16, C18, C37, and C40.

This sequence belongs to the bacterial ribosomal protein bL31 family. Type A subfamily. As to quaternary structure, part of the 50S ribosomal subunit. Requires Zn(2+) as cofactor.

Its function is as follows. Binds the 23S rRNA. In Chromohalobacter salexigens (strain ATCC BAA-138 / DSM 3043 / CIP 106854 / NCIMB 13768 / 1H11), this protein is Large ribosomal subunit protein bL31.